The following is a 325-amino-acid chain: Protein ORANGE-GREEN, chloroplastic (325 aa).

The transit peptide at M1–S54 directs the protein to the chloroplast. The segment covering A53–S71 has biased composition (low complexity). The tract at residues A53–T77 is disordered. The next 2 membrane-spanning stretches (helical) occupy residues L164–A184 and I217–V237. The segment at V226–H317 is CR-type-like. A CXXCXGXG motif repeat occupies C248 to G255. The stretch at C259–G266 is one CXXCXXXG motif repeat. One copy of the CXXCXGXG motif repeat lies at C292–G299. A CXXCXXXG motif repeat occupies C303–G310.

The protein belongs to the orange-like family.

It localises to the plastid. Its subcellular location is the chloroplast membrane. Functionally, involved in chloroplast differentiation in fruit flesh. In Cucumis melo (Muskmelon), this protein is Protein ORANGE-GREEN, chloroplastic.